Here is a 342-residue protein sequence, read N- to C-terminus: MPILAPLGPSPLSEVFTYSNLPSPVEMATGKDYRHSKAGILSKLPPSIKPYAELLRIHRPLGYYLNISPYVVGVAYTAAIAPVSLPATVLLNRLIILSLWGFLIRSGGCAWNDLIDMDIDRQVSRTKLRPLPRGAISPTSAALLTAIIFGCGGLLLLLLPSQCTVEAGIILFFALLYPFGKRFSDYPQLILVNIAWAIPMAMSSLEVDPLDFPYSTLSMCIFIASVIVMIDVVYACQDAEEDKKIGARSMAVRYSDITDQLAYGFFFSGAISLLLGGVLRGLGLPFIVFSVGGHIFGFLRFLSVTLGEGTKSASVESRAKSSCLLATVFWVLGFFLEYLARS.

A run of 9 helical transmembrane segments spans residues 71 to 91, 95 to 115, 141 to 161, 163 to 183, 187 to 207, 216 to 236, 261 to 278, 282 to 304, and 319 to 339; these read VVGV…TVLL, IILS…NDLI, AALL…LLPS, CTVE…GKRF, PQLI…SLEV, TLSM…VYAC, LAYG…LGGV, LGLP…FLSV, and AKSS…LEYL.

Belongs to the UbiA prenyltransferase family. Requires Mg(2+) as cofactor.

It localises to the membrane. It carries out the reaction 3,5-dimethylorsellinate + (2E,6E)-farnesyl diphosphate = (3R)-3-farnesyl-6-hydroxy-2,3,5-trimethyl-4-oxocyclohexa-1,5-diene-1-carboxylate + diphosphate + H(+). The protein operates within secondary metabolite biosynthesis; terpenoid biosynthesis. In terms of biological role, polyprenyl transferase; part of the gene cluster that mediates the biosynthesis of terretonin, a fungal meroterpenoid that acts as a mycotoxin. The first step of the pathway is the synthesis of 3,5-dimethylorsellinic acid (DMOA) by the polyketide synthase trt4. DMOA is then prenylated into farnesyl-DMOA by the polyprenyl transferase trt2. Methylation by the methyltransferase trt5 then leads to farnesyl-DMOA methyl ester which is further subject to epoxidation by the FAD-dependent monooxygenase trt8 to yield epoxyfarnesyl-DMOA methyl ester. Cyclization of epoxyfarnesyl-DMOA methyl ester by the terpene cyclase trt1 leads to a tetracycle intermediate which is in turn converted to preterretonin. Dehydrogenase trt9 comes next to transform preterretonin to preterrenoid. The FAD-dependent monooxygenase trt3 is then required for the C-hydroxylation at C16 of preterrenoid to yield terrenoid. The cytochrome P450 trt6 catalyzes three successive oxidations to transform terrenoid into an unstable intermediate, which then undergoes the D-ring expansion and unusual rearrangement of the methoxy group to afford the core skeleton of terretonin. Trt14 catalyzes the D-ring expansion of terretonin involving intramolecular methoxy rearrangement as well as the hydrolysis of the expanded D-ring and the methyl ester moiety. Finally, the nonheme iron-dependent dioxygenase trt7 accomplishes the last two oxidation reactions steps to complete the biosynthesis of terretonin. Terretonin C is produced via spontaneous decarboxylation of the terretonin precursor. Another shunt product of the terretonin biosynthesis is dihydrofarnesyl-DMOA, derived from epoxyfarnesyl-DMOA through hydrolysis of the epoxide. This is Polyprenyl transferase trt2 from Aspergillus terreus (strain NIH 2624 / FGSC A1156).